The primary structure comprises 135 residues: Holo-[acyl-carrier-protein] synthase (135 aa).

Mg(2+)-binding residues include aspartate 8 and glutamate 58.

It belongs to the P-Pant transferase superfamily. AcpS family. Mg(2+) serves as cofactor.

Its subcellular location is the cytoplasm. It carries out the reaction apo-[ACP] + CoA = holo-[ACP] + adenosine 3',5'-bisphosphate + H(+). In terms of biological role, transfers the 4'-phosphopantetheine moiety from coenzyme A to a Ser of acyl-carrier-protein. In Leuconostoc citreum (strain KM20), this protein is Holo-[acyl-carrier-protein] synthase.